Consider the following 670-residue polypeptide: Sodium/glucose cotransporter 2 (670 aa).

Residues 1-20 lie on the Extracellular side of the membrane; that stretch reads MEGHVEEGSELGEQKVLIDN. Residues 21-42 form a helical membrane-spanning segment; the sequence is PADILVIAAYFLLVIGVGLWSM. Residues 43–61 are Cytoplasmic-facing; sequence FRTNRGTVGGYFLAGRSMV. The helical transmembrane segment at 62–83 threads the bilayer; sequence WWPVGASLFASNIGSGHFVGLA. Na(+) contacts are provided by Ala-71 and Ile-74. The Extracellular portion of the chain corresponds to 84 to 91; the sequence is GTGAASGL. A helical membrane pass occupies residues 92-112; it reads AVAGFEWNALFVVLLLGWLFV. Topologically, residues 113–134 are cytoplasmic; sequence PVYLTAGVITMPQYLRKRFGGR. A helical transmembrane segment spans residues 135–164; it reads RIRLYLSVLSLFLYIFTKISVDMFSGAVFI. Residues 165–171 lie on the Extracellular side of the membrane; the sequence is QQALGWN. Helical transmembrane passes span 172–193 and 194–215; these read IYASVIALLGITMIYTVTGGLA and ALMYTDTVQTFVILAGAFILTG. The Extracellular segment spans residues 216–273; sequence YAFHEVGGYSGLFDKYLGAVTSLTVSKDPAVGNISSTCYQPRPDSYHLLRDPVTGGLP. Asn-248 carries N-linked (GlcNAc...) asparagine glycosylation. Disulfide bonds link Cys-253-Cys-509, Cys-343-Cys-349, Cys-353-Cys-359, and Cys-515-Cys-520. Residues 274–293 traverse the membrane as a helical segment; sequence WPALLLGLTIVSGWHWCSDQ. Residues 294 to 307 lie on the Cytoplasmic side of the membrane; sequence VIVQRCLAGKNLTH. Residues 308 to 329 form a helical membrane-spanning segment; sequence IKAGCILCGYLKLMPMFLMVMP. Residues 330–373 lie on the Extracellular side of the membrane; it reads GMISRILYPDEVACVVPEVCKRVCGTEVGCSNIAYPRLVVKLMP. Residues 374 to 404 traverse the membrane as a helical segment; the sequence is NGLRGLMLAVMLAALMSSLASIFNSSSTLFT. Residues Ala-387, Ser-390, and Ser-391 each coordinate Na(+). Over 405–422 the chain is Cytoplasmic; that stretch reads MDIYTRLRPRAGDRELLL. Residues 423–444 form a helical membrane-spanning segment; it reads VGRLWVVFIVAVSVAWLPVVQA. Topologically, residues 445–449 are extracellular; that stretch reads AQGGQ. The helical transmembrane segment at 450 to 475 threads the bilayer; sequence LFDYIQSVSSYLAPPVSAVFVLALFV. Topologically, residues 476-480 are cytoplasmic; sequence PRVNE. The chain crosses the membrane as a helical span at residues 481–503; it reads KGAFWGLIGGLLMGLARLIPEFF. The Extracellular portion of the chain corresponds to 504-521; it reads FGTGSCVRPSACPAIFCR. Residues 522-545 traverse the membrane as a helical segment; the sequence is VHYLYFAIILFFCSGFLTLAISRC. Over 546–649 the chain is Cytoplasmic; sequence TAPIPQKHLH…DISEDPSWAR (104 aa). The helical transmembrane segment at 650–668 threads the bilayer; that stretch reads VVNLNALLMMTVAVFLWGF. Residues 669–670 are Extracellular-facing; that stretch reads YA.

Belongs to the sodium:solute symporter (SSF) (TC 2.A.21) family. In terms of assembly, forms a heterodimer (via TM13) with PDZK1IP1 (via N-terminal transmembrane helix); this interaction enhances SLC5A2 transporter activity. Glycosylated at a single site. As to expression, kidney, in proximal tubule S1 segments.

Its subcellular location is the apical cell membrane. It catalyses the reaction D-glucose(out) + Na(+)(out) = D-glucose(in) + Na(+)(in). With respect to regulation, enhanced by the interaction with PDZK1IP1/MAP17. In terms of biological role, electrogenic Na(+)-coupled sugar symporter that actively transports D-glucose at the plasma membrane, with a Na(+) to sugar coupling ratio of 1:1. Transporter activity is driven by a transmembrane Na(+) electrochemical gradient set by the Na(+)/K(+) pump. Unlike SLC5A1/SGLT1, requires the auxiliary protein PDZK1IP1/MAP17 for full transporter activity. Has a primary role in D-glucose reabsorption from glomerular filtrate across the brush border of the early proximal tubules of the kidney. The sequence is that of Sodium/glucose cotransporter 2 (Slc5a2) from Rattus norvegicus (Rat).